We begin with the raw amino-acid sequence, 269 residues long: UPF0739 protein C1orf74 (269 aa).

Belongs to the UPF0739 family.

This Homo sapiens (Human) protein is UPF0739 protein C1orf74 (C1orf74).